Here is a 73-residue protein sequence, read N- to C-terminus: Large ribosomal subunit protein bL31 (73 aa).

Zn(2+)-binding residues include Cys16, Cys18, Cys37, and Cys40.

It belongs to the bacterial ribosomal protein bL31 family. Type A subfamily. Part of the 50S ribosomal subunit. It depends on Zn(2+) as a cofactor.

In terms of biological role, binds the 23S rRNA. The polypeptide is Large ribosomal subunit protein bL31 (Pseudomonas savastanoi pv. phaseolicola (strain 1448A / Race 6) (Pseudomonas syringae pv. phaseolicola (strain 1448A / Race 6))).